The sequence spans 651 residues: Acetyl-coenzyme A synthetase (651 aa).

CoA-binding positions include 190–193 (RGGR), Thr309, and Asn333. ATP contacts are provided by residues 385–387 (GEP), 409–414 (DTWWQT), Asp498, and Arg513. Ser521 provides a ligand contact to CoA. ATP is bound at residue Arg524. 3 residues coordinate Mg(2+): Val535, His537, and Val540. A CoA-binding site is contributed by Arg582. Position 607 is an N6-acetyllysine (Lys607).

Belongs to the ATP-dependent AMP-binding enzyme family. It depends on Mg(2+) as a cofactor. Acetylated. Deacetylation by the SIR2-homolog deacetylase activates the enzyme.

The enzyme catalyses acetate + ATP + CoA = acetyl-CoA + AMP + diphosphate. In terms of biological role, catalyzes the conversion of acetate into acetyl-CoA (AcCoA), an essential intermediate at the junction of anabolic and catabolic pathways. AcsA undergoes a two-step reaction. In the first half reaction, AcsA combines acetate with ATP to form acetyl-adenylate (AcAMP) intermediate. In the second half reaction, it can then transfer the acetyl group from AcAMP to the sulfhydryl group of CoA, forming the product AcCoA. This is Acetyl-coenzyme A synthetase from Xanthobacter autotrophicus (strain ATCC BAA-1158 / Py2).